Reading from the N-terminus, the 493-residue chain is Lysine--tRNA ligase (493 aa).

The 'HIGH' region motif lies at 26-34; that stretch reads PSGHIHLGN. The short motif at 270-274 is the 'KMSKS' region element; sequence AMKSS.

This sequence belongs to the class-I aminoacyl-tRNA synthetase family.

The protein resides in the cytoplasm. It catalyses the reaction tRNA(Lys) + L-lysine + ATP = L-lysyl-tRNA(Lys) + AMP + diphosphate. The protein is Lysine--tRNA ligase (lysS) of Archaeoglobus fulgidus (strain ATCC 49558 / DSM 4304 / JCM 9628 / NBRC 100126 / VC-16).